Consider the following 223-residue polypeptide: Riboflavin kinase (223 aa).

A unknown region spans residues 1–89 (MHRINALKHL…KHIFCGDEDK (89 aa)). A riboflavin kinase region spans residues 90–223 (VELYGNVITG…IMIEDRSACE (134 aa)). 99–104 (GLGEGQ) is a CDP binding site. Residues Thr-128 and Asn-130 each contribute to the Mg(2+) site. The FMN site is built by Ser-185 and Glu-193. Residue 198–201 (VHLR) coordinates CDP.

The protein belongs to the archaeal riboflavin kinase family. Mg(2+) is required as a cofactor.

The enzyme catalyses riboflavin + CTP = CDP + FMN + H(+). The protein operates within cofactor biosynthesis; FMN biosynthesis; FMN from riboflavin (CTP route): step 1/1. Catalyzes the CTP-dependent phosphorylation of riboflavin (vitamin B2) to form flavin mononucleotide (FMN). This chain is Riboflavin kinase (ribK), found in Methanococcoides burtonii (strain DSM 6242 / NBRC 107633 / OCM 468 / ACE-M).